Here is an 876-residue protein sequence, read N- to C-terminus: Leucine--tRNA ligase (876 aa).

The interval 1-20 is disordered; it reads MATERYNPRDAEPRWQQKWN. A 'HIGH' region motif is present at residues 43–53; that stretch reads PYPSGRIHMGH. Positions 632 to 636 match the 'KMSKS' region motif; that stretch reads KMSKS. Lysine 635 serves as a coordination point for ATP.

It belongs to the class-I aminoacyl-tRNA synthetase family.

The protein localises to the cytoplasm. It catalyses the reaction tRNA(Leu) + L-leucine + ATP = L-leucyl-tRNA(Leu) + AMP + diphosphate. The protein is Leucine--tRNA ligase of Rhizobium leguminosarum bv. trifolii (strain WSM2304).